The sequence spans 656 residues: Anion exchange transporter (656 aa).

Over 1 to 75 (MTGAKRKKRS…LSFAMLSSVH (75 aa)) the chain is Cytoplasmic. The chain crosses the membrane as a helical span at residues 76-96 (PVFGLYGSLFPAIIYAIFGMG). Residues 97 to 144 (RHVATGTFALTSLISANAVERLVPQSSRNLTTQSNSSVLGLSEFELQR) lie on the Extracellular side of the membrane. Residues 145 to 165 (IGVAAAVSFLGGVIQLVMFVL) traverse the membrane as a helical segment. Residue Q166 is a topological domain, cytoplasmic. The chain crosses the membrane as a helical span at residues 167–187 (LGSATFLLTEPVISAMTTGAA). The Extracellular segment spans residues 188–199 (THVVTSQVKYLL). The helical transmembrane segment at 200–220 (GIKMPYISGPLGFFYIYAYVF) threads the bilayer. Over 221-222 (EN) the chain is Cytoplasmic. The helical transmembrane segment at 223-243 (IKSVQLEALLFSLLSIIVLVL) threads the bilayer. Residues 244-254 (VKELNEQFKRK) are Extracellular-facing. A helical transmembrane segment spans residues 255 to 275 (IKVVLPVDLVLIIAASFACYC). Topologically, residues 276–306 (TNMENTYGLEVVGHIPNGIPPPRAPPMNILS) are cytoplasmic. The helical transmembrane segment at 307–327 (AVLTEAFGVALVGYVASLALA) threads the bilayer. The Extracellular segment spans residues 328-343 (QGSAKKFKYSVDDNQE). The helical transmembrane segment at 344-364 (FLAHGLSNVIPSFLFCIPSAA) threads the bilayer. Residues 365 to 383 (AMGRTAGLYSTGAKTQVAC) are Cytoplasmic-facing. A run of 2 helical transmembrane segments spans residues 384 to 404 (LISC…LYWL) and 405 to 425 (PMCV…IQFR). The Extracellular segment spans residues 426 to 448 (DLKKYWNVDKIDWGIWISTYIFT). Residues 449–469 (ICFAANVGLLFGVICTIAIVL) form a helical membrane-spanning segment. At 470-656 (GRFPRAKTLS…LSKASDHSEV (187 aa)) the chain is on the cytoplasmic side. One can recognise an STAS domain in the interval 492–641 (TEMHDETSQQ…DSVPAAISII (150 aa)). The interval 641-656 (IQSNKNLSKASDHSEV) is membrane targeting.

Belongs to the SLC26A/SulP transporter (TC 2.A.53) family. As to expression, expressed in the Reissner's membrane epithelial cells in the cochlea (at protein level). Expressed in the retinal pigment epithelium (at protein level). Abundantly expressed in parietal cells on the glandular portion of the stomach. Lower levels are observed in the kidney, with expression in the proximal tubule and thick ascending limb of the loop of Henle. Also expressed in distal segments of nephron, in extraglomerular mesagial cells and a subpopulation of intercalated cells of outer medullary collecting ducts. Expressed in the thyroid gland.

The protein resides in the basolateral cell membrane. It localises to the recycling endosome membrane. The protein localises to the apical cell membrane. Its subcellular location is the lateral cell membrane. It carries out the reaction chloride(in) = chloride(out). It catalyses the reaction iodide(out) = iodide(in). The catalysed reaction is bromide(in) = bromide(out). The enzyme catalyses oxalate(in) = oxalate(out). It carries out the reaction nitrate(in) = nitrate(out). It catalyses the reaction sulfate(in) = sulfate(out). The catalysed reaction is hydrogencarbonate(in) = hydrogencarbonate(out). The enzyme catalyses D-gluconate(in) = D-gluconate(out). It carries out the reaction thiocyanate(in) = thiocyanate(out). It catalyses the reaction hydrogencarbonate(in) + chloride(out) = hydrogencarbonate(out) + chloride(in). Its activity is regulated as follows. Regulated by pH. Activity inhibited by all inhibitors of several anion channels and transporters, including 4,4'-Di-isothiocyanatostilbene-2,2'-disulfonic acid (DIDS), diphenylamine-2-carboxylic acid, glybenclamide and 5-Nitro-2-(3-phenylpropyl-amino)benzoic acid. Functionally, acts as an anion channel mediating the transport of chloride, bromide, iodide, nitrate, sulfate, gluconate, thiocyanate and bicarbonate ions. Its permeability towards bicarbonate is weak and increases when pH is above 7. Mediates oxalate transport. Mediates thiocyanate transport in retinal pigment epithelium cells. Mediates iodide transport in the thyroid gland, playing an important role in the synthesis of thyroid hormones and the maintenance of thyroid function. Although it is an anion channel, according to PubMed:12736153 and PubMed:19723628 it has been shown to exhibit chloride-bicarbonate exchanger activity. This is Anion exchange transporter from Mus musculus (Mouse).